We begin with the raw amino-acid sequence, 297 residues long: tRNA dimethylallyltransferase (297 aa).

9 to 16 (GPTASGKS) is an ATP binding site. Residue 11–16 (TASGKS) participates in substrate binding. Interaction with substrate tRNA stretches follow at residues 34–37 (DSMQ) and 155–159 (QRVIR).

This sequence belongs to the IPP transferase family. As to quaternary structure, monomer. Mg(2+) is required as a cofactor.

The enzyme catalyses adenosine(37) in tRNA + dimethylallyl diphosphate = N(6)-dimethylallyladenosine(37) in tRNA + diphosphate. Catalyzes the transfer of a dimethylallyl group onto the adenine at position 37 in tRNAs that read codons beginning with uridine, leading to the formation of N6-(dimethylallyl)adenosine (i(6)A). The protein is tRNA dimethylallyltransferase of Leuconostoc mesenteroides subsp. mesenteroides (strain ATCC 8293 / DSM 20343 / BCRC 11652 / CCM 1803 / JCM 6124 / NCDO 523 / NBRC 100496 / NCIMB 8023 / NCTC 12954 / NRRL B-1118 / 37Y).